The following is a 315-amino-acid chain: Lipoyl synthase (315 aa).

Residues C62, C67, C73, C88, C92, C95, and S302 each coordinate [4Fe-4S] cluster. Residues 74–291 (FNHGAATFMI…KKIALKLGFS (218 aa)) enclose the Radical SAM core domain.

The protein belongs to the radical SAM superfamily. Lipoyl synthase family. [4Fe-4S] cluster is required as a cofactor.

The protein resides in the cytoplasm. The enzyme catalyses [[Fe-S] cluster scaffold protein carrying a second [4Fe-4S](2+) cluster] + N(6)-octanoyl-L-lysyl-[protein] + 2 oxidized [2Fe-2S]-[ferredoxin] + 2 S-adenosyl-L-methionine + 4 H(+) = [[Fe-S] cluster scaffold protein] + N(6)-[(R)-dihydrolipoyl]-L-lysyl-[protein] + 4 Fe(3+) + 2 hydrogen sulfide + 2 5'-deoxyadenosine + 2 L-methionine + 2 reduced [2Fe-2S]-[ferredoxin]. Its pathway is protein modification; protein lipoylation via endogenous pathway; protein N(6)-(lipoyl)lysine from octanoyl-[acyl-carrier-protein]: step 2/2. Its function is as follows. Catalyzes the radical-mediated insertion of two sulfur atoms into the C-6 and C-8 positions of the octanoyl moiety bound to the lipoyl domains of lipoate-dependent enzymes, thereby converting the octanoylated domains into lipoylated derivatives. The protein is Lipoyl synthase of Ruthia magnifica subsp. Calyptogena magnifica.